The primary structure comprises 418 residues: MTSREASQAPLEFGGPLGVAALLILLPATMFHLLLAARSGPARLLALPAYLPGLEELWSPWALLLLFIWLGLQVALYLLPARKVAEGLELKDKSRLRYPINGFQALVLTALLMGLGVSVGLPLGALPGMLLPLAFATTLTSFIFSLLLYAKALVAPASALAPGGNSGNSMYDFFLGRELNPRLGSFDFKYFCELRPGLIGWVFINLALLMQEAELRGSPSLAMWLVNGFQLLYVGDALWYEESVLTTMDIIHDGFGFMLVFGDLAWVPFTYSLQAQFLLYHPQPLGLPMALLICLLKVIGYYIFRGANSQKNTFRKNPSDPSVAGLETIPTATGRQLLVSGWWGMVRHPNYLGDLIMALAWSLPCGLSHLLPYFYVLYFTALLVHREARDEQQCLQKYGRAWQEYCKRVPYRIIPYVY.

6 helical membrane-spanning segments follow: residues 13 to 35, 62 to 81, 102 to 124, 129 to 148, 255 to 277, and 287 to 304; these read FGGP…HLLL, ALLL…LLPA, GFQA…LPLG, MLLP…SLLL, FGFM…QAQF, and LPMA…YYIF. NADP(+) is bound by residues K311, R315, L338, W343, and 350–351; that span reads NY. The chain crosses the membrane as a helical span at residues 355–377; it reads LIMALAWSLPCGLSHLLPYFYVL. NADP(+)-binding positions include D390, 394-398, and Y405; that span reads CLQKY.

It belongs to the ERG4/ERG24 family. In terms of tissue distribution, strongly expressed in liver, weaker in ovary, testis, kidney and brain.

Its subcellular location is the endoplasmic reticulum membrane. It is found in the microsome membrane. The enzyme catalyses 4,4-dimethyl-5alpha-cholesta-8,24-dien-3beta-ol + NADP(+) = 4,4-dimethyl-5alpha-cholesta-8,14,24-trien-3beta-ol + NADPH + H(+). It catalyses the reaction 5alpha-cholest-8,14-dien-3beta-ol + NADPH + H(+) = 5alpha-cholest-8-en-3beta-ol + NADP(+). It carries out the reaction 4,4-dimethyl-8,14-cholestadien-3beta-ol + NADPH + H(+) = 4,4-dimethyl-5alpha-cholest-8-en-3beta-ol + NADP(+). The protein operates within steroid biosynthesis; cholesterol biosynthesis. In terms of biological role, catalyzes the reduction of the C14-unsaturated bond of lanosterol, as part of the metabolic pathway leading to cholesterol biosynthesis. The sequence is that of Delta(14)-sterol reductase TM7SF2 (Tm7sf2) from Mus musculus (Mouse).